We begin with the raw amino-acid sequence, 52 residues long: Transcriptional regulator SlrA (52 aa).

One can recognise a Sin domain in the interval 1 to 38; that stretch reads MKTHVKKDLDKGWHMLIQEARSIGLGIHDVRQFLESET.

As to quaternary structure, component of the SlrR/SlrA complex.

Required specifically for induction of eps and yqxM operons by antagonizing SinR. Regulates SlrR activity. Controls the initiation of biofilm formation. The chain is Transcriptional regulator SlrA (slrA) from Bacillus subtilis (strain 168).